The chain runs to 253 residues: Succinate dehydrogenase [ubiquinone] iron-sulfur subunit, mitochondrial (253 aa).

The 2Fe-2S ferredoxin-type domain maps to 23–114 (FKIYRWNPDK…TTKIYPLPHM (92 aa)). [2Fe-2S] cluster contacts are provided by cysteine 74, cysteine 79, cysteine 82, and cysteine 94. One can recognise a 4Fe-4S ferredoxin-type domain in the interval 156 to 186 (DRKKLDGLYECILCACCSTSCPSYWWNQEEY). [4Fe-4S] cluster-binding residues include cysteine 166, cysteine 169, and cysteine 172. Cysteine 176 is a binding site for [3Fe-4S] cluster. An a ubiquinone-binding site is contributed by tryptophan 181. Residues cysteine 223 and cysteine 229 each coordinate [3Fe-4S] cluster. Cysteine 233 contacts [4Fe-4S] cluster.

This sequence belongs to the succinate dehydrogenase/fumarate reductase iron-sulfur protein family. In terms of assembly, component of complex II composed of four subunits: a flavoprotein (FP), an iron-sulfur protein (IP), and a cytochrome b composed of a large and a small subunit. [2Fe-2S] cluster is required as a cofactor. It depends on [3Fe-4S] cluster as a cofactor. Requires [4Fe-4S] cluster as cofactor.

The protein localises to the mitochondrion inner membrane. The catalysed reaction is a quinone + succinate = fumarate + a quinol. It functions in the pathway carbohydrate metabolism; tricarboxylic acid cycle; fumarate from succinate (eukaryal route): step 1/1. Iron-sulfur protein (IP) subunit of succinate dehydrogenase (SDH) that is involved in complex II of the mitochondrial electron transport chain and is responsible for transferring electrons from succinate to ubiquinone (coenzyme Q). The sequence is that of Succinate dehydrogenase [ubiquinone] iron-sulfur subunit, mitochondrial (SDH2) from Candida glabrata (strain ATCC 2001 / BCRC 20586 / JCM 3761 / NBRC 0622 / NRRL Y-65 / CBS 138) (Yeast).